The following is a 138-amino-acid chain: ATP synthase epsilon chain (138 aa).

It belongs to the ATPase epsilon chain family. As to quaternary structure, F-type ATPases have 2 components, CF(1) - the catalytic core - and CF(0) - the membrane proton channel. CF(1) has five subunits: alpha(3), beta(3), gamma(1), delta(1), epsilon(1). CF(0) has three main subunits: a, b and c.

It is found in the cell membrane. Functionally, produces ATP from ADP in the presence of a proton gradient across the membrane. The sequence is that of ATP synthase epsilon chain from Streptococcus equi subsp. zooepidemicus (strain H70).